The primary structure comprises 265 residues: Isoprenyl transferase 1 (265 aa).

Asp-43 is a catalytic residue. Asp-43 lines the Mg(2+) pocket. Substrate contacts are provided by residues 44 to 47 (GNRR), Trp-48, His-61, and 89 to 91 (STE). Catalysis depends on Asn-92, which acts as the Proton acceptor. Substrate contacts are provided by residues Arg-95, Arg-214, and 220-222 (RLS). Glu-233 contributes to the Mg(2+) binding site.

It belongs to the UPP synthase family. As to quaternary structure, homodimer. It depends on Mg(2+) as a cofactor.

Catalyzes the condensation of isopentenyl diphosphate (IPP) with allylic pyrophosphates generating different type of terpenoids. The chain is Isoprenyl transferase 1 from Corynebacterium diphtheriae (strain ATCC 700971 / NCTC 13129 / Biotype gravis).